Consider the following 386-residue polypeptide: Succinate--CoA ligase [ADP-forming] subunit beta (386 aa).

The 236-residue stretch at 9 to 244 (KEVLRKYGVA…LDEEDPKEIE (236 aa)) folds into the ATP-grasp domain. ATP is bound by residues Lys-46, 53–55 (GRG), Glu-99, Cys-102, and Glu-107. Mg(2+)-binding residues include Asn-199 and Asp-213. Substrate contacts are provided by residues Asn-264 and 321–323 (GIM).

This sequence belongs to the succinate/malate CoA ligase beta subunit family. In terms of assembly, heterotetramer of two alpha and two beta subunits. Mg(2+) is required as a cofactor.

It carries out the reaction succinate + ATP + CoA = succinyl-CoA + ADP + phosphate. The catalysed reaction is GTP + succinate + CoA = succinyl-CoA + GDP + phosphate. The protein operates within carbohydrate metabolism; tricarboxylic acid cycle; succinate from succinyl-CoA (ligase route): step 1/1. In terms of biological role, succinyl-CoA synthetase functions in the citric acid cycle (TCA), coupling the hydrolysis of succinyl-CoA to the synthesis of either ATP or GTP and thus represents the only step of substrate-level phosphorylation in the TCA. The beta subunit provides nucleotide specificity of the enzyme and binds the substrate succinate, while the binding sites for coenzyme A and phosphate are found in the alpha subunit. In Bacillus licheniformis (strain ATCC 14580 / DSM 13 / JCM 2505 / CCUG 7422 / NBRC 12200 / NCIMB 9375 / NCTC 10341 / NRRL NRS-1264 / Gibson 46), this protein is Succinate--CoA ligase [ADP-forming] subunit beta.